Reading from the N-terminus, the 187-residue chain is 1,6-anhydro-N-acetylmuramyl-L-alanine amidase AmpD (187 aa).

Residues 29 to 167 form the N-acetylmuramoyl-L-alanine amidase domain; it reads TLLVVHNISL…APERKTDPGP (139 aa). Zn(2+) is bound at residue H34. E116 functions as the Proton acceptor in the catalytic mechanism. Zn(2+) is bound by residues H154 and D164.

The protein belongs to the N-acetylmuramoyl-L-alanine amidase 2 family. Zn(2+) is required as a cofactor.

Its subcellular location is the cytoplasm. It carries out the reaction Hydrolyzes the link between N-acetylmuramoyl residues and L-amino acid residues in certain cell-wall glycopeptides.. Involved in cell wall peptidoglycan recycling. Specifically cleaves the amide bond between the lactyl group of N-acetylmuramic acid and the alpha-amino group of the L-alanine in degradation products containing an anhydro N-acetylmuramyl moiety. This chain is 1,6-anhydro-N-acetylmuramyl-L-alanine amidase AmpD, found in Enterobacter cloacae.